The following is a 218-amino-acid chain: ATP synthase subunit a (218 aa).

5 helical membrane-spanning segments follow: residues 17-37, 75-95, 104-124, 162-184, and 196-216; these read IYSTVVNTWIIMILLLAGIFL, YLPLVATLFIFILSLNLSWFI, DLSTTAAFAVTTIILVQIFGI, LFGNLFGEEMVVTILFLMIPFLL, and GTIQAFVFTLLTITYIANFVH.

The protein belongs to the ATPase A chain family. F-type ATPases have 2 components, CF(1) - the catalytic core - and CF(0) - the membrane proton channel. CF(1) has five subunits: alpha(3), beta(3), gamma(1), delta(1), epsilon(1). CF(0) has three main subunits: a(1), b(2) and c(9-12). The alpha and beta chains form an alternating ring which encloses part of the gamma chain. CF(1) is attached to CF(0) by a central stalk formed by the gamma and epsilon chains, while a peripheral stalk is formed by the delta and b chains. In this bacterium the a and b subunits are transcribed but do not seem to be translated, thus the ATP synthase consists of the alpha, beta, gamma, delta, epsilon and c subunits.

The protein resides in the cell membrane. Functionally, key component of the proton channel; it plays a direct role in the translocation of protons across the membrane. In Moorella thermoacetica (strain ATCC 39073 / JCM 9320), this protein is ATP synthase subunit a.